Consider the following 44-residue polypeptide: uncharacterized protein (44 aa).

The chain crosses the membrane as a helical span at residues 4-24 (ISSILIRGGGVLIVVILLLWI).

The protein localises to the membrane. This is an uncharacterized protein from Ornithodoros (relapsing fever ticks).